The chain runs to 657 residues: UvrABC system protein B (657 aa).

One can recognise a Helicase ATP-binding domain in the interval 25–182 (KSIKKGNEFQ…KKLIEIQYER (158 aa)). 38–45 (GVTGSGKT) serves as a coordination point for ATP. Positions 91–114 (YYDYYQPEAYVPQTDTFIEKDASI) match the Beta-hairpin motif. The 167-residue stretch at 429–595 (QIDDLYTEIQ…TINKEVRDLI (167 aa)) folds into the Helicase C-terminal domain. The 36-residue stretch at 621–656 (KKLIKEYTEEMMLAAKNLQFERAAQLRDEIEELKGK) folds into the UVR domain.

The protein belongs to the UvrB family. Forms a heterotetramer with UvrA during the search for lesions. Interacts with UvrC in an incision complex.

Its subcellular location is the cytoplasm. The UvrABC repair system catalyzes the recognition and processing of DNA lesions. A damage recognition complex composed of 2 UvrA and 2 UvrB subunits scans DNA for abnormalities. Upon binding of the UvrA(2)B(2) complex to a putative damaged site, the DNA wraps around one UvrB monomer. DNA wrap is dependent on ATP binding by UvrB and probably causes local melting of the DNA helix, facilitating insertion of UvrB beta-hairpin between the DNA strands. Then UvrB probes one DNA strand for the presence of a lesion. If a lesion is found the UvrA subunits dissociate and the UvrB-DNA preincision complex is formed. This complex is subsequently bound by UvrC and the second UvrB is released. If no lesion is found, the DNA wraps around the other UvrB subunit that will check the other stand for damage. This is UvrABC system protein B from Clostridium botulinum (strain Alaska E43 / Type E3).